An 833-amino-acid chain; its full sequence is Ventricular zone-expressed PH domain-containing protein 1 (833 aa).

Interaction with TGFBR1 stretches follow at residues 201-319 (AELL…LANM) and 663-833 (ESTF…TTYL). Residues 716–819 (QPLIEGKLKE…WLQCINVALA (104 aa)) enclose the PH domain.

This sequence belongs to the MELT/VEPH family. In terms of assembly, interacts with TGFBR1. As to expression, specifically expressed in kidney and eye. In the eye, expressed in retinal pigmented epithelium but not in the neural retina.

The protein resides in the cell membrane. In terms of biological role, interacts with TGF-beta receptor type-1 (TGFBR1) and inhibits dissociation of activated SMAD2 from TGFBR1, impeding its nuclear accumulation and resulting in impaired TGF-beta signaling. May also affect FOXO, Hippo and Wnt signaling. The polypeptide is Ventricular zone-expressed PH domain-containing protein 1 (Veph1) (Mus musculus (Mouse)).